A 995-amino-acid chain; its full sequence is DNA polymerase (995 aa).

Belongs to the DNA polymerase type-B family.

It carries out the reaction DNA(n) + a 2'-deoxyribonucleoside 5'-triphosphate = DNA(n+1) + diphosphate. The sequence is that of DNA polymerase (RF1) from Kluyveromyces lactis (strain ATCC 8585 / CBS 2359 / DSM 70799 / NBRC 1267 / NRRL Y-1140 / WM37) (Yeast).